We begin with the raw amino-acid sequence, 281 residues long: Cell growth regulator with EF hand domain protein 1 (281 aa).

The N-terminal stretch at methionine 1–alanine 21 is a signal peptide. 2 consecutive EF-hand domains span residues asparagine 71–proline 106 and proline 115–arginine 150. Aspartate 84, aspartate 86, asparagine 88, glutamine 90, glutamate 95, aspartate 128, aspartate 130, aspartate 132, and glutamate 139 together coordinate Ca(2+). Residues glutamate 146–isoleucine 281 form a disordered region. Positions leucine 169–glycine 184 are enriched in polar residues. Over residues threonine 185–valine 213 the composition is skewed to basic and acidic residues. Phosphoserine occurs at positions 217 and 228. Residues glycine 234–proline 256 are compositionally biased toward basic and acidic residues.

Post-translationally, probably digested extracellularly by an unknown serine protease generating extremely hydrophobic bioactive peptides. In terms of tissue distribution, expressed predominantly in whole brain and kidney, with limited expression in heart, lung, liver, and skeletal muscle and no expression in spleen and testis. Also expressed in pituitary gland, adrenal gland, digestive tract, and reproductive organs.

It is found in the secreted. Functionally, mediates cell-cell adhesion in a calcium-dependent manner. Able to inhibit growth in several cell lines. The sequence is that of Cell growth regulator with EF hand domain protein 1 from Rattus norvegicus (Rat).